A 176-amino-acid chain; its full sequence is Ribosome rescue factor SmrB (176 aa).

The 76-residue stretch at 93–168 folds into the Smr domain; it reads LDLHGYRQSE…GDAALLVLID (76 aa).

It belongs to the SmrB family. Associates with collided ribosomes, but not with correctly translating polysomes.

Its function is as follows. Acts as a ribosome collision sensor. Detects stalled/collided disomes (pairs of ribosomes where the leading ribosome is stalled and a second ribosome has collided with it) and endonucleolytically cleaves mRNA at the 5' boundary of the stalled ribosome. Stalled/collided disomes form a new interface (primarily via the 30S subunits) that binds SmrB. Cleaved mRNA becomes available for tmRNA ligation, leading to ribosomal subunit dissociation and rescue of stalled ribosomes. The protein is Ribosome rescue factor SmrB of Shewanella baltica (strain OS223).